A 177-amino-acid polypeptide reads, in one-letter code: Biotin-dependent acetyl-/propionyl-coenzyme A carboxylase epsilon subunit (177 aa).

The disordered stretch occupies residues 1-112 (MGTCPCESSE…TEKPLHPHEP (112 aa)). Positions 18 to 100 (VSGTNEVSDG…SDGNETNNPA (83 aa)) are enriched in polar residues.

Interacts with the AccA3/AccD5 biotin-dependent acyl-CoA carboxylase complex. Interacts with the AccA3/AccD6 complex. Is also part of the long-chain acyl-CoA carboxylase (LCC) complex, which is composed of AccA3, AccD4, AccD5 and AccE5. The four subunits are essential for activity, but AccD5, together with AccE5, probably plays a structural role rather than a catalytic one.

Its function is as follows. Stimulates activity of the AccA3/AccD5 biotin-dependent acyl-CoA carboxylase complex. Interacts with AccD5 and modulates its carboxylase activity for acetyl-CoA and propionyl-CoA. Inhibits activity of the AccA3/AccD6 complex. Is also required for the activity of the long-chain acyl-CoA carboxylase (LCC) complex. In Mycobacterium tuberculosis (strain ATCC 25618 / H37Rv), this protein is Biotin-dependent acetyl-/propionyl-coenzyme A carboxylase epsilon subunit.